The chain runs to 542 residues: CTP synthase (542 aa).

Residues 1-265 (MTRYIFVTGG…DDFVVERFGL (265 aa)) form an amidoligase domain region. A CTP-binding site is contributed by Ser13. Position 13 (Ser13) interacts with UTP. ATP is bound by residues 14–19 (SLGKGI) and Asp71. Asp71 and Glu139 together coordinate Mg(2+). CTP-binding positions include 146–148 (DIE), 186–191 (KTKPTQ), and Lys222. UTP is bound by residues 186–191 (KTKPTQ) and Lys222. The Glutamine amidotransferase type-1 domain maps to 290 to 541 (TIAMVGKYME…VKAALAQKNK (252 aa)). Gly351 contributes to the L-glutamine binding site. Cys378 acts as the Nucleophile; for glutamine hydrolysis in catalysis. Residues 379–382 (LGMQ), Glu402, and Arg469 each bind L-glutamine. Residues His514 and Glu516 contribute to the active site.

Belongs to the CTP synthase family. As to quaternary structure, homotetramer.

The enzyme catalyses UTP + L-glutamine + ATP + H2O = CTP + L-glutamate + ADP + phosphate + 2 H(+). It catalyses the reaction L-glutamine + H2O = L-glutamate + NH4(+). The catalysed reaction is UTP + NH4(+) + ATP = CTP + ADP + phosphate + 2 H(+). Its pathway is pyrimidine metabolism; CTP biosynthesis via de novo pathway; CTP from UDP: step 2/2. Allosterically activated by GTP, when glutamine is the substrate; GTP has no effect on the reaction when ammonia is the substrate. The allosteric effector GTP functions by stabilizing the protein conformation that binds the tetrahedral intermediate(s) formed during glutamine hydrolysis. Inhibited by the product CTP, via allosteric rather than competitive inhibition. Functionally, catalyzes the ATP-dependent amination of UTP to CTP with either L-glutamine or ammonia as the source of nitrogen. Regulates intracellular CTP levels through interactions with the four ribonucleotide triphosphates. The protein is CTP synthase of Pseudomonas putida (strain ATCC 700007 / DSM 6899 / JCM 31910 / BCRC 17059 / LMG 24140 / F1).